A 557-amino-acid polypeptide reads, in one-letter code: E3 ubiquitin-protein ligase ARIH1 (557 aa).

Residues 1 to 47 (MDSDEGYNYEFDEDEECSEEDSGAEEEEDEDDDEPDDDTLDLGEVEL) are compositionally biased toward acidic residues. The tract at residues 1–95 (MDSDEGYNYE…GGGGGPGHEQ (95 aa)) is disordered. A compositionally biased stretch (gly residues) spans 65–92 (ETGGGGGSALGPGGGGGGGGGGGGGGPG). The segment at 105–153 (TAEQILQHMVECIREVNEVIQNPATITRILLSHFNWDKEKLMERYFDGN) is UBA-like. Lysine 142 is subject to N6-acetyllysine. Residues 182–393 (QDMPCQICYL…SAWYNCNRYN (212 aa)) form a TRIAD supradomain region. Cysteine 186, cysteine 189, cysteine 203, histidine 205, cysteine 208, cysteine 211, cysteine 231, cysteine 236, cysteine 276, cysteine 281, cysteine 297, cysteine 299, cysteine 304, cysteine 307, histidine 312, cysteine 317, cysteine 344, and cysteine 347 together coordinate Zn(2+). Residues 186-236 (CQICYLNYPNSYFTGLECGHKFCMQCWSEYLTTKIMEEGMGQTISCPAHGC) form an RING-type 1 zinc finger. The IBR-type zinc-finger motif lies at 256-317 (LKYQHLITNS…GENWHDPVKC (62 aa)). An RING-type 2; atypical zinc finger spans residues 344-375 (CPKCHVTIEKDGGCNHMVCRNQNCKAEFCWVC). The active site involves cysteine 357. Cysteine 362, cysteine 367, cysteine 372, cysteine 375, histidine 382, and cysteine 389 together coordinate Zn(2+). The interval 408–557 (RAALQRYLFY…EKDLWEYIED (150 aa)) is ariadne domain.

The protein belongs to the RBR family. Ariadne subfamily. In terms of assembly, interacts (via the first RING-type zinc finger) with UBE2L3. Associates with cullin-RING ubiquitin ligase (CRL) complexes containing CUL1, CUL2 and CUL3. Interacts with neddylated CUL1. Interacts with neddylated CUL2. Interacts with neddylated CUL3. Interacts with neddylated CUL4A. As to expression, widely expressed.

It is found in the cytoplasm. Its subcellular location is the nucleus. The protein resides in the cajal body. It carries out the reaction [E2 ubiquitin-conjugating enzyme]-S-ubiquitinyl-L-cysteine + [acceptor protein]-L-lysine = [E2 ubiquitin-conjugating enzyme]-L-cysteine + [acceptor protein]-N(6)-ubiquitinyl-L-lysine.. It participates in protein modification; protein ubiquitination. Its activity is regulated as follows. Autoinhibited by the ariadne domain, which masks the second RING-type zinc finger that contains the active site and inhibits the E3 activity. Inhibition is relieved upon binding to neddylated cullin-RING ubiquitin ligase complexes, which activate the E3 ligase activity of ARIH1. E3 ubiquitin-protein ligase, which catalyzes ubiquitination of target proteins together with ubiquitin-conjugating enzyme E2 UBE2L3. Acts as an atypical E3 ubiquitin-protein ligase by working together with cullin-RING ubiquitin ligase (CRL) complexes and initiating ubiquitination of CRL substrates: associates with CRL complexes and specifically mediates addition of the first ubiquitin on CRLs targets. The initial ubiquitin is then elongated by CDC34/UBE2R1 and UBE2R2. E3 ubiquitin-protein ligase activity is activated upon binding to neddylated cullin-RING ubiquitin ligase complexes. Plays a role in protein translation in response to DNA damage by mediating ubiquitination of EIF4E2, the consequences of EIF4E2 ubiquitination are however unclear. According to a report, EIF4E2 ubiquitination leads to promote EIF4E2 cap-binding and protein translation arrest. According to another report EIF4E2 ubiquitination leads to its subsequent degradation. Acts as the ligase involved in ISGylation of EIF4E2. In vitro, controls the degradation of the LINC (LInker of Nucleoskeleton and Cytoskeleton) complex member SUN2 and may therefore have a role in the formation and localization of the LINC complex, and as a consequence, nuclear subcellular localization and nuclear morphology. The protein is E3 ubiquitin-protein ligase ARIH1 of Homo sapiens (Human).